A 774-amino-acid chain; its full sequence is E3 ubiquitin-protein ligase UHRF1 (774 aa).

The 78-residue stretch at Met1–Ala78 folds into the Ubiquitin-like domain. A phosphoserine mark is found at Ser76, Ser91, Ser93, Ser95, and Ser161. A disordered region spans residues Thr83–Lys120. Tudor-like stretches follow at residues Gly129 to Arg205 and Asp212 to Pro280. Lys276 participates in a covalent cross-link: Glycyl lysine isopeptide (Lys-Gly) (interchain with G-Cter in SUMO2). The residue at position 284 (Ser284) is a Phosphoserine. A linker region spans residues Arg293–Ser298. Residue Ser295 is modified to Phosphoserine; by PKA. Residues Gly296 to Asp363 form a PHD-type zinc finger. Histone H3R2me0 binding regions lie at residues Cys330 to Asp334 and Pro350 to Glu352. Ser365 is modified (phosphoserine). Lys382 participates in a covalent cross-link: Glycyl lysine isopeptide (Lys-Gly) (interchain with G-Cter in SUMO2). A methyl-CpG binding and interaction with HDAC1 region spans residues Lys382 to Glu605. Lys396 is modified (N6-acetyllysine). Residues Gly416–Arg578 form the YDG domain. A required to promote base flipping region spans residues His442–Val443. Residues Ala460–Gly461 and Asp466 each bind DNA. 2 required for formation of a 5-methylcytosine-binding pocket regions span residues Tyr463–Asp466 and Tyr475–Ser478. Ser511 carries the phosphoserine modification. Lys542 carries the N6-acetyllysine; alternate modification. Lys542 is covalently cross-linked (Glycyl lysine isopeptide (Lys-Gly) (interchain with G-Cter in SUMO2); alternate). The interval Lys616–Leu657 is disordered. Ser631 is subject to Phosphoserine; by CDK1. Phosphoserine is present on residues Ser641 and Ser648. Lys656 is covalently cross-linked (Glycyl lysine isopeptide (Lys-Gly) (interchain with G-Cter in SUMO2)). The RING-type zinc finger occupies Cys705–Arg744. Position 751 is a phosphoserine (Ser751).

In terms of assembly, interacts with DNMT3A and DNMT3B. Interacts with DNMT1; the interaction is direct. Interacts with USP7; leading to its deubiquitination. Interacts with histone H3. Interacts with HDAC1, but not with HDAC2. Interacts with BLTP3A. Interacts with PML. Interacts with EHMT2. Binds methylated CpG containing oligonucleotides. Interacts with ZNF263; recruited to the SIX3 promoter along with other proteins involved in chromatin modification and transcriptional corepression where it contributes to transcriptional repression. Interacts with UHRF2. Interacts with FANCD2. Interacts with TET1 isoform 2; this interaction induces the recruitment of TET1 isoform 2 to replicating heterochromatin. Phosphorylation at Ser-295 of the linker region decreases the binding to H3K9me3. Phosphorylation at Ser-631 by CDK1 during M phase impairs interaction with USP7, preventing deubiquitination and leading to degradation by the proteasome. Post-translationally, ubiquitinated; which leads to proteasomal degradation. Autoubiquitinated; interaction with USP7 leads to deubiquitination and prevents degradation. Ubiquitination and degradation takes place during M phase, when phosphorylation at Ser-631 prevents interaction with USP7 and subsequent deubiquitination. Polyubiquitination may be stimulated by DNA damage.

The protein localises to the nucleus. The enzyme catalyses S-ubiquitinyl-[E2 ubiquitin-conjugating enzyme]-L-cysteine + [acceptor protein]-L-lysine = [E2 ubiquitin-conjugating enzyme]-L-cysteine + N(6)-ubiquitinyl-[acceptor protein]-L-lysine.. It participates in protein modification; protein ubiquitination. Multidomain protein that acts as a key epigenetic regulator by bridging DNA methylation and chromatin modification. Specifically recognizes and binds hemimethylated DNA at replication forks via its YDG domain and recruits DNMT1 methyltransferase to ensure faithful propagation of the DNA methylation patterns through DNA replication. In addition to its role in maintenance of DNA methylation, also plays a key role in chromatin modification: through its tudor-like regions and PHD-type zinc fingers, specifically recognizes and binds histone H3 trimethylated at 'Lys-9' (H3K9me3) and unmethylated at 'Arg-2' (H3R2me0), respectively, and recruits chromatin proteins. Enriched in pericentric heterochromatin where it recruits different chromatin modifiers required for this chromatin replication. Also localizes to euchromatic regions where it negatively regulates transcription possibly by impacting DNA methylation and histone modifications. Has E3 ubiquitin-protein ligase activity by mediating the ubiquitination of target proteins such as histone H3 and PML. It is still unclear how E3 ubiquitin-protein ligase activity is related to its role in chromatin in vivo. Plays a role in DNA repair by cooperating with UHRF2 to ensure recruitment of FANCD2 to interstrand cross-links (ICLs) leading to FANCD2 activation. Plays a pivotal role in the establishment of correct spindle architecture by catalyzing the 'Lys-63'-linked ubiquitination of KIF11, thereby controlling KIF11 localization on the spindle. The protein is E3 ubiquitin-protein ligase UHRF1 (Uhrf1) of Rattus norvegicus (Rat).